A 362-amino-acid chain; its full sequence is 3-isopropylmalate dehydrogenase (362 aa).

78–91 (GPQWDTLPSDKRPE) serves as a coordination point for NAD(+). Substrate is bound by residues Arg-98, Arg-108, Arg-136, and Asp-226. Positions 226, 250, and 254 each coordinate Mg(2+). An NAD(+)-binding site is contributed by 284 to 296 (GSAPDIAGQDKAN).

Belongs to the isocitrate and isopropylmalate dehydrogenases family. LeuB type 1 subfamily. As to quaternary structure, homodimer. Requires Mg(2+) as cofactor. Mn(2+) serves as cofactor.

The protein resides in the cytoplasm. The enzyme catalyses (2R,3S)-3-isopropylmalate + NAD(+) = 4-methyl-2-oxopentanoate + CO2 + NADH. The protein operates within amino-acid biosynthesis; L-leucine biosynthesis; L-leucine from 3-methyl-2-oxobutanoate: step 3/4. Catalyzes the oxidation of 3-carboxy-2-hydroxy-4-methylpentanoate (3-isopropylmalate) to 3-carboxy-4-methyl-2-oxopentanoate. The product decarboxylates to 4-methyl-2 oxopentanoate. This is 3-isopropylmalate dehydrogenase from Gloeobacter violaceus (strain ATCC 29082 / PCC 7421).